Here is a 259-residue protein sequence, read N- to C-terminus: Leucyl/phenylalanyl-tRNA--protein transferase (259 aa).

It belongs to the L/F-transferase family.

Its subcellular location is the cytoplasm. It carries out the reaction N-terminal L-lysyl-[protein] + L-leucyl-tRNA(Leu) = N-terminal L-leucyl-L-lysyl-[protein] + tRNA(Leu) + H(+). The catalysed reaction is N-terminal L-arginyl-[protein] + L-leucyl-tRNA(Leu) = N-terminal L-leucyl-L-arginyl-[protein] + tRNA(Leu) + H(+). It catalyses the reaction L-phenylalanyl-tRNA(Phe) + an N-terminal L-alpha-aminoacyl-[protein] = an N-terminal L-phenylalanyl-L-alpha-aminoacyl-[protein] + tRNA(Phe). Functions in the N-end rule pathway of protein degradation where it conjugates Leu, Phe and, less efficiently, Met from aminoacyl-tRNAs to the N-termini of proteins containing an N-terminal arginine or lysine. The polypeptide is Leucyl/phenylalanyl-tRNA--protein transferase (Teredinibacter turnerae (strain ATCC 39867 / T7901)).